Consider the following 266-residue polypeptide: Thymidylate synthase (266 aa).

Arginine 24 serves as a coordination point for dUMP. Residue histidine 54 coordinates (6R)-5,10-methylene-5,6,7,8-tetrahydrofolate. 129–130 (RR) serves as a coordination point for dUMP. Cysteine 149 (nucleophile) is an active-site residue. DUMP-binding positions include 169 to 172 (RSAD), asparagine 180, and 210 to 212 (HIY). Aspartate 172 lines the (6R)-5,10-methylene-5,6,7,8-tetrahydrofolate pocket. Residue alanine 265 coordinates (6R)-5,10-methylene-5,6,7,8-tetrahydrofolate.

It belongs to the thymidylate synthase family. Bacterial-type ThyA subfamily. As to quaternary structure, homodimer.

Its subcellular location is the cytoplasm. The enzyme catalyses dUMP + (6R)-5,10-methylene-5,6,7,8-tetrahydrofolate = 7,8-dihydrofolate + dTMP. It participates in pyrimidine metabolism; dTTP biosynthesis. Functionally, catalyzes the reductive methylation of 2'-deoxyuridine-5'-monophosphate (dUMP) to 2'-deoxythymidine-5'-monophosphate (dTMP) while utilizing 5,10-methylenetetrahydrofolate (mTHF) as the methyl donor and reductant in the reaction, yielding dihydrofolate (DHF) as a by-product. This enzymatic reaction provides an intracellular de novo source of dTMP, an essential precursor for DNA biosynthesis. The protein is Thymidylate synthase of Mycolicibacterium smegmatis (strain ATCC 700084 / mc(2)155) (Mycobacterium smegmatis).